The sequence spans 324 residues: MIDELIERMKKGDRRATARLITLVENDEEKAREIIRKIYPLTGNAYIVGITGPPGAGKSTLLDKLIKEARKEGLIVGVIAIDPTSPFTGGALLGDRIRMQRHSTDPGVFIRSMATRGSLGGLAKATNDAIKVLDAYGCDVIFVETVGVGQVEVDIVKTADTVVLVTVPGLGDDVQTIKAGLMEIADIFVINKADKEGADATYFELNLALDLESDKWRELGWRPPVVETVATMNKGIKELWDKIKEHREFLERSGRLKEKRRKRIEEEIKTIVSGIIAGKVEASIKRGEFEEIIRRVSQKDIDPYSAADMILKEIIGGGLSVQEN.

GTP contacts are provided by residues 52–60, aspartate 194, and 229–231; these read GPPGAGKST and VAT.

Belongs to the SIMIBI class G3E GTPase family. ArgK/MeaB subfamily.

In terms of biological role, may have GTPase activity. May also bind and hydrolyze ATP. May function as chaperone. This chain is Putative GTPase PYRAB02490, found in Pyrococcus abyssi (strain GE5 / Orsay).